Consider the following 110-residue polypeptide: UPF0122 protein Sca_0859 (110 aa).

This sequence belongs to the UPF0122 family.

In terms of biological role, might take part in the signal recognition particle (SRP) pathway. This is inferred from the conservation of its genetic proximity to ftsY/ffh. May be a regulatory protein. This chain is UPF0122 protein Sca_0859, found in Staphylococcus carnosus (strain TM300).